A 378-amino-acid polypeptide reads, in one-letter code: Erythronate-4-phosphate dehydrogenase (378 aa).

Residues Ser-45 and Thr-67 each coordinate substrate. An NAD(+)-binding site is contributed by Asp-147. Arg-209 is an active-site residue. Position 233 (Asp-233) interacts with NAD(+). Glu-238 is a catalytic residue. His-255 (proton donor) is an active-site residue. Position 258 (Gly-258) interacts with NAD(+). Tyr-259 contacts substrate.

The protein belongs to the D-isomer specific 2-hydroxyacid dehydrogenase family. PdxB subfamily. In terms of assembly, homodimer.

It localises to the cytoplasm. The enzyme catalyses 4-phospho-D-erythronate + NAD(+) = (R)-3-hydroxy-2-oxo-4-phosphooxybutanoate + NADH + H(+). The protein operates within cofactor biosynthesis; pyridoxine 5'-phosphate biosynthesis; pyridoxine 5'-phosphate from D-erythrose 4-phosphate: step 2/5. Catalyzes the oxidation of erythronate-4-phosphate to 3-hydroxy-2-oxo-4-phosphonooxybutanoate. The sequence is that of Erythronate-4-phosphate dehydrogenase from Shewanella denitrificans (strain OS217 / ATCC BAA-1090 / DSM 15013).